A 523-amino-acid polypeptide reads, in one-letter code: 2-isopropylmalate synthase (523 aa).

The Pyruvate carboxyltransferase domain occupies 5 to 267 (VIIFDTTLRD…ETGINAKEIH (263 aa)). Mn(2+)-binding residues include Asp14, His202, His204, and Asn238. Positions 392–523 (KLQQLVVHSD…QQNKRELGGV (132 aa)) are regulatory domain.

The protein belongs to the alpha-IPM synthase/homocitrate synthase family. LeuA type 1 subfamily. As to quaternary structure, homodimer. Requires Mn(2+) as cofactor.

It is found in the cytoplasm. The enzyme catalyses 3-methyl-2-oxobutanoate + acetyl-CoA + H2O = (2S)-2-isopropylmalate + CoA + H(+). The protein operates within amino-acid biosynthesis; L-leucine biosynthesis; L-leucine from 3-methyl-2-oxobutanoate: step 1/4. Its function is as follows. Catalyzes the condensation of the acetyl group of acetyl-CoA with 3-methyl-2-oxobutanoate (2-ketoisovalerate) to form 3-carboxy-3-hydroxy-4-methylpentanoate (2-isopropylmalate). This chain is 2-isopropylmalate synthase, found in Shewanella pealeana (strain ATCC 700345 / ANG-SQ1).